Here is a 386-residue protein sequence, read N- to C-terminus: Bifunctional chorismate mutase/prephenate dehydratase (386 aa).

Residues 1 to 92 enclose the Chorismate mutase domain; that stretch reads MTSENPLLAL…DSVLTQQALL (92 aa). 7 residues coordinate substrate: R11, R28, K39, D48, E52, S84, and Q88. One can recognise a Prephenate dehydratase domain in the interval 105–285; sequence RIAFLGPKGS…NFTRFVVLAR (181 aa). The ACT domain maps to 299–376; sequence TLLMATGQQA…RSMKVLGCYP (78 aa).

Its subcellular location is the cytoplasm. The enzyme catalyses chorismate = prephenate. It catalyses the reaction prephenate + H(+) = 3-phenylpyruvate + CO2 + H2O. The protein operates within amino-acid biosynthesis; L-phenylalanine biosynthesis; phenylpyruvate from prephenate: step 1/1. Its pathway is metabolic intermediate biosynthesis; prephenate biosynthesis; prephenate from chorismate: step 1/1. Functionally, catalyzes the Claisen rearrangement of chorismate to prephenate and the decarboxylation/dehydration of prephenate to phenylpyruvate. This Escherichia coli O157:H7 protein is Bifunctional chorismate mutase/prephenate dehydratase (pheA).